We begin with the raw amino-acid sequence, 312 residues long: MIIETPSKVILFGEHAVVYGYRAISMAIDLTSTIEIKETQEDEIILNLNDLNKSLGLNLNEIKNINPNNFGDFKYCLCAIKNTLDYLNIEPKTGFKINISSKIPISCGLGSSASITIGTIKAVSGFYNKELKDDEIAKLGYMVEKEIQGKASITDTSTITYKGILEIKNNKFRKIKGEFEEFLKNCKFLIVYAEKRKKKTAELVNEVAKIENKDEIFKEIDKVIDEALKIKNKEDFGKLMTKNHELLKKLNISTPKLDRIVDIGNRFGFGAKLTGAGGGGCVIILVNEEKEKELLKELNKEDVRIFNCRMMN.

104-114 is an ATP binding site; the sequence is PISCGLGSSAS. The Proton acceptor role is filled by Asp155.

The protein belongs to the GHMP kinase family. Mevalonate kinase subfamily. As to quaternary structure, homodimer. Mg(2+) is required as a cofactor.

It is found in the cytoplasm. The catalysed reaction is (R)-mevalonate + ATP = (R)-5-phosphomevalonate + ADP + H(+). Its pathway is isoprenoid biosynthesis; isopentenyl diphosphate biosynthesis via mevalonate pathway; isopentenyl diphosphate from (R)-mevalonate: step 1/3. Farnesyl- and geranyl-pyrophosphates are competitive inhibitors. Slightly inhibited by high concentration of ATP. Catalyzes the phosphorylation of (R)-mevalonate (MVA) to (R)-mevalonate 5-phosphate (MVAP). Functions in the mevalonate (MVA) pathway leading to isopentenyl diphosphate (IPP), a key precursor for the biosynthesis of isoprenoid compounds such as archaeal membrane lipids. This Methanocaldococcus jannaschii (strain ATCC 43067 / DSM 2661 / JAL-1 / JCM 10045 / NBRC 100440) (Methanococcus jannaschii) protein is Mevalonate kinase.